A 364-amino-acid polypeptide reads, in one-letter code: Aminomethyltransferase (364 aa).

Belongs to the GcvT family. In terms of assembly, the glycine cleavage system is composed of four proteins: P, T, L and H.

The enzyme catalyses N(6)-[(R)-S(8)-aminomethyldihydrolipoyl]-L-lysyl-[protein] + (6S)-5,6,7,8-tetrahydrofolate = N(6)-[(R)-dihydrolipoyl]-L-lysyl-[protein] + (6R)-5,10-methylene-5,6,7,8-tetrahydrofolate + NH4(+). The glycine cleavage system catalyzes the degradation of glycine. This chain is Aminomethyltransferase, found in Escherichia coli (strain 55989 / EAEC).